The chain runs to 642 residues: Stress-activated map kinase-interacting protein 1 homolog (642 aa).

The CRIM domain maps to 189–314; the sequence is ARIREVIGYC…EREPLFQGLL (126 aa). The disordered stretch occupies residues 603–642; the sequence is IVSPSSDAPSRSSNGKNGGKFRKMSSLMASVMGRRKSDSK. The segment covering 605 to 615 has biased composition (low complexity); that stretch reads SPSSDAPSRSS.

The protein belongs to the SIN1 family. Component of the target of rapamycin complex 2 (TORC2).

Functionally, component of the target of rapamycin complex 2 (TORC2), which transduces signals from growth factors to pathways involved in proliferation, cytoskeletal organization and anabolic output. In response to growth factors, TORC2 phosphorylates and activates AGC protein kinase family members, such as Akt1. Within the TORC2 complex, sinh-1 acts as a substrate adapter which recognizes and binds AGC protein kinase family members for phosphorylation by mTor. The chain is Stress-activated map kinase-interacting protein 1 homolog (sinh-1) from Caenorhabditis elegans.